Consider the following 103-residue polypeptide: Large ribosomal subunit protein bL21 (103 aa).

It belongs to the bacterial ribosomal protein bL21 family. Part of the 50S ribosomal subunit. Contacts protein L20.

In terms of biological role, this protein binds to 23S rRNA in the presence of protein L20. This Aliivibrio salmonicida (strain LFI1238) (Vibrio salmonicida (strain LFI1238)) protein is Large ribosomal subunit protein bL21.